A 284-amino-acid chain; its full sequence is Shikimate dehydrogenase (NADP(+)) (284 aa).

Residues 20–22 (SIS) and serine 67 contribute to the shikimate site. Catalysis depends on lysine 71, which acts as the Proton acceptor. Residue aspartate 83 participates in NADP(+) binding. Shikimate-binding residues include asparagine 92 and aspartate 107. NADP(+)-binding positions include 129-133 (GAGGA) and isoleucine 227. Tyrosine 229 serves as a coordination point for shikimate. Glycine 250 lines the NADP(+) pocket.

The protein belongs to the shikimate dehydrogenase family. In terms of assembly, homodimer.

It catalyses the reaction shikimate + NADP(+) = 3-dehydroshikimate + NADPH + H(+). Its pathway is metabolic intermediate biosynthesis; chorismate biosynthesis; chorismate from D-erythrose 4-phosphate and phosphoenolpyruvate: step 4/7. In terms of biological role, involved in the biosynthesis of the chorismate, which leads to the biosynthesis of aromatic amino acids. Catalyzes the reversible NADPH linked reduction of 3-dehydroshikimate (DHSA) to yield shikimate (SA). This chain is Shikimate dehydrogenase (NADP(+)), found in Streptococcus pneumoniae serotype 2 (strain D39 / NCTC 7466).